A 406-amino-acid polypeptide reads, in one-letter code: [Pyruvate dehydrogenase (acetyl-transferring)] kinase isozyme 3, mitochondrial (406 aa).

The Histidine kinase domain maps to 131-362 (IEYKEKFGFD…DAVIYLKALS (232 aa)). 247–254 (ELFKNSMR) provides a ligand contact to ATP. Residue K278 is modified to N6-succinyllysine. ATP contacts are provided by residues D287, 306 to 307 (ST), and 323 to 328 (GFGYGL). The segment at 383–406 (TPEADDWSNPSSEPRDASKYKAKQ) is disordered. Over residues 395 to 406 (EPRDASKYKAKQ) the composition is skewed to basic and acidic residues.

Belongs to the PDK/BCKDK protein kinase family. In terms of assembly, homodimer. Interacts with the pyruvate dehydrogenase complex subunit DLAT, and is part of the multimeric pyruvate dehydrogenase complex that contains multiple copies of pyruvate dehydrogenase (E1), dihydrolipoamide acetyltransferase (DLAT, E2) and lipoamide dehydrogenase (DLD, E3). Expressed in heart, skeletal muscle, spinal cord, as well as fetal and adult brain.

It is found in the mitochondrion matrix. It catalyses the reaction L-seryl-[pyruvate dehydrogenase E1 alpha subunit] + ATP = O-phospho-L-seryl-[pyruvate dehydrogenase E1 alpha subunit] + ADP + H(+). Activated by interaction with DLAT. Inhibited by AZD7545, dichloroacetate and radicicol. In terms of biological role, inhibits pyruvate dehydrogenase activity by phosphorylation of the E1 subunit PDHA1, and thereby regulates glucose metabolism and aerobic respiration. Can also phosphorylate PDHA2. Decreases glucose utilization and increases fat metabolism in response to prolonged fasting, and as adaptation to a high-fat diet. Plays a role in glucose homeostasis and in maintaining normal blood glucose levels in function of nutrient levels and under starvation. Plays a role in the generation of reactive oxygen species. In Homo sapiens (Human), this protein is [Pyruvate dehydrogenase (acetyl-transferring)] kinase isozyme 3, mitochondrial (PDK3).